The chain runs to 604 residues: MCGIVGVVGNRNATDILMQGLEKLEYRGYDSAGIFVANGDKLSLVKSVGRIADLRSKIGIDVAGSTGIGHTRWATHGQATVENAHPHTSASSRFVLVHNGVIENYLQMKEEYLAGHEFKGQTDTEIAVHLIGKFVEEDGLSVLEAFKNALSIIEGSYAFALIDTEDADTIYVAKNKSPLLIGLGEGYNMVCSDAMAMIRETSQFMEIHDKELVILTKDSVTVLDYDGNQLERDSYTAELDLSDIGKGTYPFYMLKEIDEQPTVMRKLISTYSDESGKMAIDPAIVKTIQEADRIYILAAGTSYNAGFASKAMIEQLTDTPVELGVASEWGYNMPLLSQKPMFILLSQSGETADSRQVLVKANQMGIPSLTVTNVPGSTLSREATYTMLLHAGPEIAVASTKAYTAQVAALAFLSKAVGEANGKKEALEFDLVHELSLVAQSIEATLSEKDLIASKVEKLLATTRNAFYIGRGNDYYVAMEASLKLKEISYIQCEGFAAGELKHGTISLIEDGTPVIGLISSSELVAAHTRGNIQEVAARGASVLTVVEEGLDREGDDIVVNKVHPYLATIGMVIPTQLIAYYASLQRGLDVDKPRNLAKAVTVE.

The active-site Nucleophile; for GATase activity is the Cys-2. Residues 2-218 form the Glutamine amidotransferase type-2 domain; the sequence is CGIVGVVGNR…DKELVILTKD (217 aa). 2 consecutive SIS domains span residues 284–423 and 456–594; these read IVKT…ANGK and VEKL…VDKP. Lys-599 functions as the For Fru-6P isomerization activity in the catalytic mechanism.

In terms of assembly, homodimer.

The protein localises to the cytoplasm. The catalysed reaction is D-fructose 6-phosphate + L-glutamine = D-glucosamine 6-phosphate + L-glutamate. Functionally, catalyzes the first step in hexosamine metabolism, converting fructose-6P into glucosamine-6P using glutamine as a nitrogen source. The polypeptide is Glutamine--fructose-6-phosphate aminotransferase [isomerizing] (Streptococcus pyogenes serotype M6 (strain ATCC BAA-946 / MGAS10394)).